The primary structure comprises 416 residues: Multifunctional CCA protein (416 aa).

Residues Gly8 and Arg11 each contribute to the ATP site. CTP-binding residues include Gly8 and Arg11. Mg(2+) contacts are provided by Asp21 and Asp23. ATP is bound by residues Arg91, Arg138, and Arg141. Positions 91, 138, and 141 each coordinate CTP. The HD domain occupies 229–331 (TGLHQELVSD…YELLQRCDAF (103 aa)).

Belongs to the tRNA nucleotidyltransferase/poly(A) polymerase family. Bacterial CCA-adding enzyme type 1 subfamily. Monomer. Can also form homodimers and oligomers. Mg(2+) serves as cofactor. Requires Ni(2+) as cofactor.

It carries out the reaction a tRNA precursor + 2 CTP + ATP = a tRNA with a 3' CCA end + 3 diphosphate. The catalysed reaction is a tRNA with a 3' CCA end + 2 CTP + ATP = a tRNA with a 3' CCACCA end + 3 diphosphate. Its function is as follows. Catalyzes the addition and repair of the essential 3'-terminal CCA sequence in tRNAs without using a nucleic acid template. Adds these three nucleotides in the order of C, C, and A to the tRNA nucleotide-73, using CTP and ATP as substrates and producing inorganic pyrophosphate. tRNA 3'-terminal CCA addition is required both for tRNA processing and repair. Also involved in tRNA surveillance by mediating tandem CCA addition to generate a CCACCA at the 3' terminus of unstable tRNAs. While stable tRNAs receive only 3'-terminal CCA, unstable tRNAs are marked with CCACCA and rapidly degraded. The protein is Multifunctional CCA protein of Xylella fastidiosa (strain M12).